Reading from the N-terminus, the 261-residue chain is 1-(5-phosphoribosyl)-5-[(5-phosphoribosylamino)methylideneamino] imidazole-4-carboxamide isomerase (261 aa).

Aspartate 8 (proton acceptor) is an active-site residue. Aspartate 130 (proton donor) is an active-site residue.

This sequence belongs to the HisA/HisF family.

Its subcellular location is the cytoplasm. It carries out the reaction 1-(5-phospho-beta-D-ribosyl)-5-[(5-phospho-beta-D-ribosylamino)methylideneamino]imidazole-4-carboxamide = 5-[(5-phospho-1-deoxy-D-ribulos-1-ylimino)methylamino]-1-(5-phospho-beta-D-ribosyl)imidazole-4-carboxamide. It participates in amino-acid biosynthesis; L-histidine biosynthesis; L-histidine from 5-phospho-alpha-D-ribose 1-diphosphate: step 4/9. This is 1-(5-phosphoribosyl)-5-[(5-phosphoribosylamino)methylideneamino] imidazole-4-carboxamide isomerase from Prosthecochloris aestuarii (strain DSM 271 / SK 413).